The primary structure comprises 596 residues: Cytochrome P450 monooxygenase FUM15 (596 aa).

Residues 476 to 512 (DRWLSPKNGNREATEQSKFKIGNQKRDSTAAPEVTQE) are disordered. Residues 484–503 (GNREATEQSKFKIGNQKRDS) are compositionally biased toward basic and acidic residues. C536 is a binding site for heme.

The protein belongs to the cytochrome P450 family. Requires heme as cofactor.

It is found in the endoplasmic reticulum. It participates in secondary metabolite biosynthesis. Its function is as follows. Cytochrome P450 monooxygenase; part of the gene cluster that mediates the biosynthesis of fumonisins B1 (FB1), B2 (FB2), B3 (FB3), and B4 (FB4), which are carcinogenic mycotoxins. Within the pathway, FUM15 may be responsible for the hydroxylations at positions C-14 and/or C-15. Also plays a role in self-protection from FB1 toxicity, probably through derivatization of FB1, and may contribute to ceramide biosynthesis. The biosynthesis starts with the FUM1-catalyzed carbon chain assembly from one molecule of acetyl-CoA, eight molecules of malonyl-CoA, and two molecules of methionine (in S-adenosyl form). The C18 polyketide chain is released from the enzyme by a nucleophilic attack of a carbanion, which is derived from R-carbon of alanine by decarboxylation, on the carbonyl carbon of polyketide acyl chain. This step is catalyzed by the pyridoxal 5'-phosphate-dependent aminoacyl transferase FUM8. The resultant 3-keto intermediate is then stereospecifically reduced to a 3-hydroxyl product by reductase FUM13. Subsequent oxidations at C-10 by the cytochrome P450 monooxygenase FUM2, C-14 and C-15 by FUM6, FUM12 or FUM15, tricarballylic esterification of the hydroxyl groups on C-14 and C-15 by acyltransferase FUM14, and C-5 hydroxylation by 2-keto-glutarate-dependent dioxygenase FUM3 furnish the biosynthesis of fumonisins. The tricarballylic moieties are most likely derived from the citric acid cycle, and their addition to the carbon backbone may involve FUM7, FUM10, FUM11 and FUM14. This Gibberella moniliformis (strain M3125 / FGSC 7600) (Maize ear and stalk rot fungus) protein is Cytochrome P450 monooxygenase FUM15.